A 611-amino-acid polypeptide reads, in one-letter code: Elongation factor 4 (611 aa).

The tr-type G domain occupies 11 to 193 (KHIRNFSIVA…KIVKDVPAPT (183 aa)). GTP is bound by residues 23-28 (DHGKST) and 140-143 (NKID).

This sequence belongs to the TRAFAC class translation factor GTPase superfamily. Classic translation factor GTPase family. LepA subfamily.

It is found in the cell membrane. The catalysed reaction is GTP + H2O = GDP + phosphate + H(+). Its function is as follows. Required for accurate and efficient protein synthesis under certain stress conditions. May act as a fidelity factor of the translation reaction, by catalyzing a one-codon backward translocation of tRNAs on improperly translocated ribosomes. Back-translocation proceeds from a post-translocation (POST) complex to a pre-translocation (PRE) complex, thus giving elongation factor G a second chance to translocate the tRNAs correctly. Binds to ribosomes in a GTP-dependent manner. This chain is Elongation factor 4, found in Limosilactobacillus reuteri (strain DSM 20016) (Lactobacillus reuteri).